Consider the following 475-residue polypeptide: Putative aldehyde dehydrogenase SERP1729 (475 aa).

Residue 201–207 (GDGSGVG) participates in NAD(+) binding. Residues E245 and C279 contribute to the active site.

It belongs to the aldehyde dehydrogenase family.

The enzyme catalyses an aldehyde + NAD(+) + H2O = a carboxylate + NADH + 2 H(+). This is Putative aldehyde dehydrogenase SERP1729 from Staphylococcus epidermidis (strain ATCC 35984 / DSM 28319 / BCRC 17069 / CCUG 31568 / BM 3577 / RP62A).